Here is a 396-residue protein sequence, read N- to C-terminus: S-adenosylmethionine synthase (396 aa).

ATP is bound at residue histidine 16. A Mg(2+)-binding site is contributed by aspartate 18. Glutamate 44 is a binding site for K(+). L-methionine is bound by residues glutamate 57 and glutamine 100. Residues 100–110 are flexible loop; sequence QSPDIAQGVDR. ATP-binding positions include 167–169, 232–233, aspartate 241, 247–248, alanine 264, and lysine 268; these read DAK, RF, and RK. Position 241 (aspartate 241) interacts with L-methionine. Lysine 272 lines the L-methionine pocket.

It belongs to the AdoMet synthase family. Homotetramer; dimer of dimers. Requires Mg(2+) as cofactor. K(+) is required as a cofactor.

It is found in the cytoplasm. The enzyme catalyses L-methionine + ATP + H2O = S-adenosyl-L-methionine + phosphate + diphosphate. It participates in amino-acid biosynthesis; S-adenosyl-L-methionine biosynthesis; S-adenosyl-L-methionine from L-methionine: step 1/1. In terms of biological role, catalyzes the formation of S-adenosylmethionine (AdoMet) from methionine and ATP. The overall synthetic reaction is composed of two sequential steps, AdoMet formation and the subsequent tripolyphosphate hydrolysis which occurs prior to release of AdoMet from the enzyme. In Ralstonia nicotianae (strain ATCC BAA-1114 / GMI1000) (Ralstonia solanacearum), this protein is S-adenosylmethionine synthase.